Consider the following 96-residue polypeptide: Protein Vpr (96 aa).

The interval 1-42 is homooligomerization; the sequence is MEQPPEDQGPQREPYNEWTLELLEELKNEAVRHFPREYLHGL. 3 positions are modified to phosphoserine; by host: Ser79, Ser94, and Ser96.

Belongs to the HIV-1 VPR protein family. Homooligomer, may form homodimer. Interacts with p6-gag region of the Pr55 Gag precursor protein through a (Leu-X-X)4 motif near the C-terminus of the P6gag protein. Interacts with host UNG. May interact with host RAD23A/HHR23A. Interacts with host VPRBP/DCAF1, leading to hijack the CUL4A-RBX1-DDB1-DCAF1/VPRBP complex, mediating ubiquitination of host proteins such as TERT and ZGPAT and arrest of the cell cycle in G2 phase. Phosphorylated on several residues by host. These phosphorylations regulate VPR activity for the nuclear import of the HIV-1 pre-integration complex.

It localises to the virion. Its subcellular location is the host nucleus. The protein localises to the host extracellular space. Its function is as follows. During virus replication, may deplete host UNG protein, and incude G2-M cell cycle arrest. Acts by targeting specific host proteins for degradation by the 26S proteasome, through association with the cellular CUL4A-DDB1 E3 ligase complex by direct interaction with host VPRPB/DCAF-1. Cell cycle arrest reportedly occurs within hours of infection and is not blocked by antiviral agents, suggesting that it is initiated by the VPR carried into the virion. Additionally, VPR induces apoptosis in a cell cycle dependent manner suggesting that these two effects are mechanistically linked. Detected in the serum and cerebrospinal fluid of AIDS patient, VPR may also induce cell death to bystander cells. Functionally, during virus entry, plays a role in the transport of the viral pre-integration (PIC) complex to the host nucleus. This function is crucial for viral infection of non-dividing macrophages. May act directly at the nuclear pore complex, by binding nucleoporins phenylalanine-glycine (FG)-repeat regions. In Homo sapiens (Human), this protein is Protein Vpr.